We begin with the raw amino-acid sequence, 930 residues long: Nonribosomal peptide synthetase btyA (930 aa).

Residues 31-440 (ESPHRLTYAE…RGRSKELICI (410 aa)) are adenylation (A) domain. A Carrier domain is found at 570–647 (PAGNETETLL…VLARQLQDGH (78 aa)). Ser607 bears the O-(pantetheine 4'-phosphoryl)serine mark. A thioesterase (TE) domain region spans residues 667-920 (PLWLIHPIGG…EDNVHKVYRV (254 aa)).

This sequence belongs to the NRP synthetase family.

It catalyses the reaction 2 3-(4-hydroxyphenyl)pyruvate + H(+) = (2S)-2-(4-hydoxybenzyl)-3-(4-hydroxyphenyl)-2-furonol carboxylate + H2O. It participates in secondary metabolite biosynthesis. Its function is as follows. Nonribosomal peptide synthetase; part of the gene cluster that mediates the biosynthesis of butyrolactones, natural products that show a wide range of biological activities such as antitumor, antiparasitic or anti-inflammatory activity. The nonribosomal peptide synthetase btyA is responsible for the production of butyrolactone II, the core structure of butyrolactones. BtyA first activates 4-hydroxyphenylpyruvate (HPPA) through its A domain to AMP-HPPA. The HPPA unit is then loaded to the T domain and eventually transferred to the TE domain. Upon loading of another HPPA unit to the T domain, the TE domain promotes the enolate formation on the unit attached. Then aldol condensation establishes the carbon-carbon bond between the two units, followed by ester cyclization, and keto-enol tautomerization to yield the gamma-butyrolactone core. Hydrolysis, and finally esterification of the exposed carboxylic acid group yields butyrolactone II. Two additional enzymes, a prenyltransferase and an epoxidase, may be involved in the tailoring modifications of butyrolactone II to give butyrolactone III and butyrolactone I. This is Nonribosomal peptide synthetase btyA from Aspergillus terreus (strain NIH 2624 / FGSC A1156).